A 1700-amino-acid chain; its full sequence is Leucine-rich repeat-containing protein 37A2 (1700 aa).

An N-terminal signal peptide occupies residues 1 to 35 (MSSAQCPALVCVMSRLRFWGPWPLLMWQLLWLLVK). Topologically, residues 36–1582 (EAQPLEWVKD…VPGYGYTDKL (1547 aa)) are extracellular. A compositionally biased stretch (polar residues) spans 54-65 (LGPPDSWSSHSS). 6 disordered regions span residues 54 to 104 (LGPP…ESTE), 130 to 156 (QQDL…DPAQ), 169 to 534 (QLST…AQPP), 559 to 580 (TEVE…KVVP), 619 to 642 (PEPT…KHPE), and 729 to 752 (TKPT…PDLG). The LRR 1 repeat unit spans residues 137 to 160 (LSPQERLPVSPKKLKKDPAQRWSL). Composition is skewed to polar residues over residues 169 to 189 (QLST…STDT) and 223 to 237 (ETQN…QSSS). 2 LRR repeats span residues 230 to 253 (LEDI…LEEE) and 267 to 290 (ESSM…EDQA). A compositionally biased stretch (low complexity) spans 238 to 249 (LQQEAPAQLPQL). Asparagine 296 is a glycosylation site (N-linked (GlcNAc...) asparagine). The span at 307-326 (TITSEPTNETESSQAQQETP) shows a compositional bias: polar residues. Over residues 358–368 (SEQQQPVQPSE) the composition is skewed to low complexity. Polar residues predominate over residues 433 to 446 (LVHQEATTRLSGSG). Low complexity predominate over residues 482–493 (SPEPINNENPSP). Low complexity predominate over residues 729-749 (TKPTTEVKPSPTTEETSTQPP). LRR repeat units follow at residues 864 to 887 (NGTF…VWKA), 888 to 911 (YSWT…SFEG), 912 to 935 (LLSL…TFEP), 937 to 959 (PFLK…TFQA), 963 to 987 (MQFL…LFKL), and 1002 to 1027 (LTTL…MACC). An N-linked (GlcNAc...) asparagine glycan is attached at asparagine 1079. One copy of the LRR 10 repeat lies at 1124-1146 (LPYFSAVNLDVKSLLLPFIKLPT). Composition is skewed to basic and acidic residues over residues 1182 to 1191 (VGRQSIRREQ) and 1201 to 1216 (AEEK…EVEQ). Disordered stretches follow at residues 1182 to 1227 (VGRQ…EKLA) and 1309 to 1328 (KTRS…PKVR). Residues 1583-1603 (ILALIVTGILTILIILFCLIV) traverse the membrane as a helical segment. Residues 1604–1700 (ICCHRRSLQE…TEEEESEALP (97 aa)) lie on the Cytoplasmic side of the membrane. Residues 1675–1685 (NEDKILNRDPG) are compositionally biased toward basic and acidic residues. The interval 1675 to 1700 (NEDKILNRDPGDSEAPTEEEESEALP) is disordered. Over residues 1689–1700 (APTEEEESEALP) the composition is skewed to acidic residues.

This sequence belongs to the LRRC37A family.

The protein localises to the membrane. In Homo sapiens (Human), this protein is Leucine-rich repeat-containing protein 37A2 (LRRC37A2).